A 468-amino-acid polypeptide reads, in one-letter code: Cysteine--tRNA ligase (468 aa).

Cys-33 is a binding site for Zn(2+). The 'HIGH' region motif lies at 35-45 (ATVQGLPHIGH). Residues Cys-211, His-236, and Glu-240 each contribute to the Zn(2+) site. Positions 267 to 271 (KMSKS) match the 'KMSKS' region motif. Lys-270 contacts ATP.

This sequence belongs to the class-I aminoacyl-tRNA synthetase family. Monomer. The cofactor is Zn(2+).

The protein resides in the cytoplasm. The catalysed reaction is tRNA(Cys) + L-cysteine + ATP = L-cysteinyl-tRNA(Cys) + AMP + diphosphate. The polypeptide is Cysteine--tRNA ligase (Mycobacterium ulcerans (strain Agy99)).